Reading from the N-terminus, the 395-residue chain is Multidrug resistance protein MdtL (395 aa).

Transmembrane regions (helical) follow at residues 4 to 24, 42 to 62, 69 to 89, 93 to 113, 131 to 151, 158 to 178, 217 to 237, 247 to 267, 271 to 291, 295 to 315, 328 to 350, and 355 to 377; these read FLLC…MYLV, IAFS…GKIA, PVAI…SRAS, LFLS…VVAF, LLNG…HLIM, SLFY…LFIL, VSVI…VMGF, ALTA…LGLF, TLML…SLAH, VTLF…GVAM, VASS…LAAI, and AMNM…IFSV.

Belongs to the major facilitator superfamily. DHA1 family. MdtL (TC 2.A.1.2.22) subfamily.

The protein resides in the cell inner membrane. In Salmonella newport (strain SL254), this protein is Multidrug resistance protein MdtL.